We begin with the raw amino-acid sequence, 649 residues long: Glycerol-3-phosphate dehydrogenase, mitochondrial (649 aa).

69–97 (DVLIIGGGATGTGCALDAATRGLNVALVE) is an FAD binding site.

Belongs to the FAD-dependent glycerol-3-phosphate dehydrogenase family. The cofactor is FAD.

The protein resides in the mitochondrion inner membrane. Its subcellular location is the mitochondrion intermembrane space. The catalysed reaction is a quinone + sn-glycerol 3-phosphate = dihydroxyacetone phosphate + a quinol. The protein operates within polyol metabolism; glycerol degradation via glycerol kinase pathway; glycerone phosphate from sn-glycerol 3-phosphate (anaerobic route): step 1/1. The sequence is that of Glycerol-3-phosphate dehydrogenase, mitochondrial (GUT2) from Saccharomyces cerevisiae (strain ATCC 204508 / S288c) (Baker's yeast).